Reading from the N-terminus, the 777-residue chain is Double zinc ribbon and ankyrin repeat-containing protein 1 (777 aa).

Residues 161–176 (QVGERTDPKTLKDLRF) are compositionally biased toward basic and acidic residues. The interval 161–202 (QVGERTDPKTLKDLRFSESPLEIPAHSGGSGSRPPTRQSQSP) is disordered. The segment covering 193 to 202 (RPPTRQSQSP) has biased composition (polar residues). S201 bears the Phosphoserine mark. 2 DZANK-type zinc fingers span residues 230–289 (CAHC…CVVC) and 358–406 (CSRC…GSCG). ANK repeat units lie at residues 442-473 (NIPL…LLAK) and 477-506 (EIAS…GYWR).

As to quaternary structure, interacts with NINL. Associates with DYNC1H1 and multiple dynein intermediate and light chains as well as actin-binding proteins.

It is found in the cytoplasm. The protein resides in the cytoskeleton. Its subcellular location is the microtubule organizing center. It localises to the centrosome. The protein localises to the cilium basal body. In terms of biological role, involved in vesicle transport in photoreceptor cells. In Macaca fascicularis (Crab-eating macaque), this protein is Double zinc ribbon and ankyrin repeat-containing protein 1 (DZANK1).